The sequence spans 137 residues: Large ribosomal subunit protein uL16 (137 aa).

It belongs to the universal ribosomal protein uL16 family. As to quaternary structure, part of the 50S ribosomal subunit.

Functionally, binds 23S rRNA and is also seen to make contacts with the A and possibly P site tRNAs. In Xylella fastidiosa (strain M23), this protein is Large ribosomal subunit protein uL16.